The chain runs to 523 residues: Pentatricopeptide repeat-containing protein At1g52640, mitochondrial (523 aa).

The N-terminal 5 residues, 1-5 (MAIRT), are a transit peptide targeting the mitochondrion. PPR repeat units follow at residues 101–135 (SLESYHILVEILGSSKQFALLWDFLIEAREYNYFE), 137–171 (SSKVFWIVFRAYSRANLPSEACRAFNRMVEFGIKP), 172–206 (CVDDLDQLLHSLCDKKHVNHAQEFFGKAKGFGIVP), 207–241 (SAKTYSILVRGWARIRDASGARKVFDEMLERNCVV), 242–276 (DLLAYNALLDALCKSGDVDGGYKMFQEMGNLGLKP), 277–311 (DAYSFAIFIHAYCDAGDVHSAYKVLDRMKRYDLVP), 312–346 (NVYTFNHIIKTLCKNEKVDDAYLLLDEMIQKGANP), 347–381 (DTWTYNSIMAYHCDHCEVNRATKLLSRMDRTKCLP), 382–416 (DRHTYNMVLKLLIRIGRFDRATEIWEGMSERKFYP), and 417–452 (TVATYTVMIHGLVRKKGKLEEACRYFEMMIDEGIPP). The disordered stretch occupies residues 498–523 (KRRRLGRRSENSEDDDDDFELERDTI). The segment covering 509–523 (SEDDDDDFELERDTI) has biased composition (acidic residues).

It belongs to the PPR family. P subfamily.

It localises to the mitochondrion. The sequence is that of Pentatricopeptide repeat-containing protein At1g52640, mitochondrial from Arabidopsis thaliana (Mouse-ear cress).